Reading from the N-terminus, the 186-residue chain is Ribosome-recycling factor (186 aa).

The protein belongs to the RRF family.

It localises to the cytoplasm. Functionally, responsible for the release of ribosomes from messenger RNA at the termination of protein biosynthesis. May increase the efficiency of translation by recycling ribosomes from one round of translation to another. The chain is Ribosome-recycling factor from Chlorobium luteolum (strain DSM 273 / BCRC 81028 / 2530) (Pelodictyon luteolum).